A 529-amino-acid polypeptide reads, in one-letter code: GMP synthase [glutamine-hydrolyzing] (529 aa).

Positions 16–205 (PVLVVDFGAQ…LHDFAGLDAD (190 aa)) constitute a Glutamine amidotransferase type-1 domain. The Nucleophile role is filled by Cys-93. Residues His-179 and Glu-181 contribute to the active site. Positions 206 to 403 (WTAANIAGVL…LDLPEEIVAR (198 aa)) constitute a GMPS ATP-PPase domain. Residue 233–239 (SGGVDSA) coordinates ATP.

Homodimer.

The catalysed reaction is XMP + L-glutamine + ATP + H2O = GMP + L-glutamate + AMP + diphosphate + 2 H(+). Its pathway is purine metabolism; GMP biosynthesis; GMP from XMP (L-Gln route): step 1/1. Catalyzes the synthesis of GMP from XMP. This is GMP synthase [glutamine-hydrolyzing] from Mycobacterium leprae (strain Br4923).